We begin with the raw amino-acid sequence, 257 residues long: tRNA pseudouridine synthase A (257 aa).

Aspartate 53 functions as the Nucleophile in the catalytic mechanism. Substrate is bound at residue tyrosine 111.

It belongs to the tRNA pseudouridine synthase TruA family. Homodimer.

The catalysed reaction is uridine(38/39/40) in tRNA = pseudouridine(38/39/40) in tRNA. Its function is as follows. Formation of pseudouridine at positions 38, 39 and 40 in the anticodon stem and loop of transfer RNAs. The chain is tRNA pseudouridine synthase A from Xanthomonas euvesicatoria pv. vesicatoria (strain 85-10) (Xanthomonas campestris pv. vesicatoria).